The following is a 464-amino-acid chain: ATP synthase subunit beta 2 (464 aa).

Gly-147–Thr-154 is a binding site for ATP.

Belongs to the ATPase alpha/beta chains family. F-type ATPases have 2 components, CF(1) - the catalytic core - and CF(0) - the membrane proton channel. CF(1) has five subunits: alpha(3), beta(3), gamma(1), delta(1), epsilon(1). CF(0) has four main subunits: a(1), b(1), b'(1) and c(9-12).

It localises to the cell inner membrane. The catalysed reaction is ATP + H2O + 4 H(+)(in) = ADP + phosphate + 5 H(+)(out). Produces ATP from ADP in the presence of a proton gradient across the membrane. The catalytic sites are hosted primarily by the beta subunits. This Cereibacter sphaeroides (strain ATCC 17029 / ATH 2.4.9) (Rhodobacter sphaeroides) protein is ATP synthase subunit beta 2.